A 295-amino-acid polypeptide reads, in one-letter code: Pyridoxal 5'-phosphate synthase subunit PdxS (295 aa).

Residue aspartate 25 coordinates D-ribose 5-phosphate. Lysine 82 (schiff-base intermediate with D-ribose 5-phosphate) is an active-site residue. A D-ribose 5-phosphate-binding site is contributed by glycine 154. D-glyceraldehyde 3-phosphate is bound at residue arginine 166. Residues glycine 215 and 236–237 (GS) each bind D-ribose 5-phosphate.

This sequence belongs to the PdxS/SNZ family. In the presence of PdxT, forms a dodecamer of heterodimers.

The enzyme catalyses aldehydo-D-ribose 5-phosphate + D-glyceraldehyde 3-phosphate + L-glutamine = pyridoxal 5'-phosphate + L-glutamate + phosphate + 3 H2O + H(+). It functions in the pathway cofactor biosynthesis; pyridoxal 5'-phosphate biosynthesis. Catalyzes the formation of pyridoxal 5'-phosphate from ribose 5-phosphate (RBP), glyceraldehyde 3-phosphate (G3P) and ammonia. The ammonia is provided by the PdxT subunit. Can also use ribulose 5-phosphate and dihydroxyacetone phosphate as substrates, resulting from enzyme-catalyzed isomerization of RBP and G3P, respectively. The sequence is that of Pyridoxal 5'-phosphate synthase subunit PdxS from Bacillus anthracis (strain A0248).